An 845-amino-acid polypeptide reads, in one-letter code: Translation initiation factor IF-2 (845 aa).

Disordered stretches follow at residues 45–91 (RRKI…SNLS) and 127–209 (EESL…TPKV). Residues 81 to 91 (SESSMAKSNLS) are compositionally biased toward polar residues. Over residues 137-149 (TEIHQEEQKEEKN) the composition is skewed to basic and acidic residues. Residues 151 to 162 (PVQTSPLSSAHS) are compositionally biased toward polar residues. Over residues 179 to 193 (TEKRKADEIKNDDRH) the composition is skewed to basic and acidic residues. The tr-type G domain maps to 343 to 512 (PRPPVVTIMG…LLQAELLDLK (170 aa)). A G1 region spans residues 352–359 (GHVDHGKT). GTP is bound at residue 352–359 (GHVDHGKT). The tract at residues 377-381 (GITQH) is G2. Residues 398-401 (DTPG) form a G3 region. Residues 398–402 (DTPGH) and 452–455 (NKID) each bind GTP. A G4 region spans residues 452–455 (NKID). A G5 region spans residues 488-490 (SAK).

This sequence belongs to the TRAFAC class translation factor GTPase superfamily. Classic translation factor GTPase family. IF-2 subfamily.

It is found in the cytoplasm. Its function is as follows. One of the essential components for the initiation of protein synthesis. Protects formylmethionyl-tRNA from spontaneous hydrolysis and promotes its binding to the 30S ribosomal subunits. Also involved in the hydrolysis of GTP during the formation of the 70S ribosomal complex. This Bartonella quintana (strain Toulouse) (Rochalimaea quintana) protein is Translation initiation factor IF-2.